A 273-amino-acid polypeptide reads, in one-letter code: Rhamnulose-1-phosphate aldolase (273 aa).

The active site involves Glu-117. Residues His-140, His-142, and His-211 each contribute to the Zn(2+) site.

The protein belongs to the aldolase class II family. RhaD subfamily. Zn(2+) serves as cofactor.

It is found in the cytoplasm. It carries out the reaction L-rhamnulose 1-phosphate = (S)-lactaldehyde + dihydroxyacetone phosphate. It functions in the pathway carbohydrate degradation; L-rhamnose degradation; glycerone phosphate from L-rhamnose: step 3/3. In terms of biological role, catalyzes the reversible cleavage of L-rhamnulose-1-phosphate to dihydroxyacetone phosphate (DHAP) and L-lactaldehyde. The sequence is that of Rhamnulose-1-phosphate aldolase from Listeria innocua serovar 6a (strain ATCC BAA-680 / CLIP 11262).